A 145-amino-acid polypeptide reads, in one-letter code: Peptide methionine sulfoxide reductase MsrB (145 aa).

The MsrB domain maps to 6–129; the sequence is KNERLQQLTD…NSAALRFIPV (124 aa). The Nucleophile role is filled by Cys118.

Belongs to the MsrB Met sulfoxide reductase family.

The catalysed reaction is L-methionyl-[protein] + [thioredoxin]-disulfide + H2O = L-methionyl-(R)-S-oxide-[protein] + [thioredoxin]-dithiol. The sequence is that of Peptide methionine sulfoxide reductase MsrB from Listeria monocytogenes serotype 4a (strain HCC23).